The following is a 244-amino-acid chain: Mono-ADP-ribosyltransferase C3 (244 aa).

The first 40 residues, 1 to 40, serve as a signal peptide directing secretion; it reads MKGIRKSILCLVLSAGVIAPVTTSIVQSPQKCYACTVDKG. Positions 44-244 constitute a TR mART core domain; sequence DTFTEFTNVE…QIMITAMIFK (201 aa). NAD(+) contacts are provided by residues Thr80, Asn87, Arg91, 128–131, and 167–169; these read RGDD and RTE. Residue Arg128 is part of the active site. The active site involves Ser174. Residues 182–185 and 211–213 each bind NAD(+); these read FGGR and QLE. Glu213 is a catalytic residue.

It to exoenzymes 3 of C.limosum and C.botulinum D phage, and to S.aureus ediN. Monomer.

The protein resides in the secreted. The catalysed reaction is L-asparaginyl-[protein] + NAD(+) = N(4)-(ADP-D-ribosyl)-L-asparaginyl-[protein] + nicotinamide + H(+). In terms of biological role, ADP-ribosylates eukaryotic Rho and Rac proteins on an asparagine residue. This chain is Mono-ADP-ribosyltransferase C3, found in Clostridium botulinum C phage (Clostridium botulinum C bacteriophage).